The sequence spans 488 residues: MDNHTKSFSSLLISLWFTALLILVEMVSCARQHRRSFLAKEADLVTNLPGQPDVSFKHYAGYVPVDKSNGRALFYWFFEAMDLPKEKPLVLWLNGGPGCSSVGYGATQEIGPFLADTNEKGLIFNPYAWNKEVNMLFLESPVGVGFSYSNTSSDYLNLDDHFAKKDAYTFLCNWFEKFPEHKGNEFYIAGESYAGIYVPELAELVYDNNEKNNDLSLHINLKGFLLGNPDISNPDDWRGWVDYAWSHAVISDETHRNINRLCNFSSDDVWNNDKCNEAIAEVDKQYNEIDIYSLYTSACKGDSAKSSYFASAQFKTNYHISSKRMPPRRLAGYDPCLDDYVKVYYNRADVQKALHASDGVNLKNWSICNMEIFHNWTYVVQSVLPIYQKLIAGGLRIWVYSGDTDGCIPVLGTRYSLNALGLPIKTAWRPWYHEKQVSGWVQEYDGLTFATFRGAGHTVPSFKPSSSLAFISAFVKGVPLSSSRVETN.

Positions 1 to 28 (MDNHTKSFSSLLISLWFTALLILVEMVS) are cleaved as a signal peptide. 3 disulfide bridges follow: Cys-99–Cys-368, Cys-262–Cys-275, and Cys-299–Cys-336. Asn-150 is a glycosylation site (N-linked (GlcNAc...) asparagine). Ser-192 is an active-site residue. Asn-263 carries N-linked (GlcNAc...) asparagine glycosylation. Residues Asn-364 and Asn-375 are each glycosylated (N-linked (GlcNAc...) asparagine). Active-site residues include Asp-405 and His-457.

It belongs to the peptidase S10 family. As to expression, expression not detected.

Its subcellular location is the secreted. Its function is as follows. Probable carboxypeptidase. The chain is Putative serine carboxypeptidase-like 30 (SCPL30) from Arabidopsis thaliana (Mouse-ear cress).